The primary structure comprises 1218 residues: Stress response protein nst1 (1218 aa).

Residues 1-26 (MPANQRKNTSQSSYLQTPRNIATPLT) show a composition bias toward polar residues. Disordered stretches follow at residues 1-237 (MPAN…QEER), 306-391 (ANHQ…HATD), 431-508 (RMAR…RMEE), 544-745 (ELEE…KLSH), 765-810 (PIKL…PPGK), 911-1010 (PMHG…DTDE), 1018-1037 (ARRSSAAPGNPGRQNFLPPP), and 1190-1218 (GAPGEIGSPISGGASRNLGPPGRAPIGGF). Low complexity predominate over residues 34–50 (TTPKKSSTSDSSETSPT). Residues 51 to 72 (MAQTTTKSNGQLPTPPTNNGAP) show a composition bias toward polar residues. Positions 75-85 (NRKKQKRRAKQ) are enriched in basic residues. A compositionally biased stretch (low complexity) spans 86–95 (AARAAAEQAQ). Positions 107 to 123 (DVKRQMQELEARFRETG) are enriched in basic and acidic residues. Residues 124–149 (LDEQYDDDEQFDPADENAYYSDEEGD) are compositionally biased toward acidic residues. The segment covering 159-171 (GSSTNGYAIPTTN) has biased composition (polar residues). The span at 174-183 (KKQKKKKKSK) shows a compositional bias: basic residues. Over residues 206-216 (SLPLPLQSPPS) the composition is skewed to low complexity. The span at 224-237 (SKEKIWNTSSQEER) shows a compositional bias: basic and acidic residues. The span at 313 to 322 (GPPPMMPPPR) shows a compositional bias: pro residues. Positions 354-382 (LGDDEDEEGDEEYSEDDGDEDDFSEEEPE) are enriched in acidic residues. Residues 421-714 (IEMMEQLAER…EARELQKREE (294 aa)) adopt a coiled-coil conformation. The span at 431–440 (RMAREEDAKE) shows a compositional bias: basic and acidic residues. A compositionally biased stretch (acidic residues) spans 470 to 501 (PEEDEYDDEEDDEDEYDSQEEDYDEEEMDSMT). Positions 544-715 (ELEEESRADS…ARELQKREEL (172 aa)) are enriched in basic and acidic residues. A compositionally biased stretch (low complexity) spans 716–730 (SAQQAAVQAAQSAAH). Positions 769 to 796 (RTNSQQDNYSIPRTPSSKYQSISPNSVT) are enriched in polar residues. Over residues 799–810 (PNSPGPIGPPGK) the composition is skewed to pro residues. Positions 940–963 (PPSQTHSRNQSGSFDGLSSATQAQ) are enriched in polar residues.

It belongs to the NST1 family.

Its subcellular location is the cytoplasm. In terms of biological role, may act as a negative regulator of salt tolerance. This chain is Stress response protein nst1 (nst1), found in Botryotinia fuckeliana (strain B05.10) (Noble rot fungus).